We begin with the raw amino-acid sequence, 500 residues long: Cytochrome P450 71D7 (500 aa).

Cys441 provides a ligand contact to heme.

Belongs to the cytochrome P450 family. Heme is required as a cofactor.

The chain is Cytochrome P450 71D7 (CYP71D7) from Solanum chacoense (Chaco potato).